Reading from the N-terminus, the 706-residue chain is Polyribonucleotide nucleotidyltransferase (706 aa).

Mg(2+)-binding residues include Asp-486 and Asp-492. The KH domain maps to 553–612 (PRIHTIKISTDKIKDVIGKGGSVIRALTEETGTTIEIEDDGTVKIASTDGEKAKHAIRRI). Positions 622-690 (GRVYQGKVTR…RQGRVRLSIK (69 aa)) constitute an S1 motif domain.

The protein belongs to the polyribonucleotide nucleotidyltransferase family. Component of the RNA degradosome, which is a multiprotein complex involved in RNA processing and mRNA degradation. Mg(2+) is required as a cofactor.

The protein localises to the cytoplasm. The enzyme catalyses RNA(n+1) + phosphate = RNA(n) + a ribonucleoside 5'-diphosphate. Functionally, involved in mRNA degradation. Catalyzes the phosphorolysis of single-stranded polyribonucleotides processively in the 3'- to 5'-direction. The protein is Polyribonucleotide nucleotidyltransferase of Pectobacterium carotovorum subsp. carotovorum (strain PC1).